The sequence spans 69 residues: Putative membrane protein insertion efficiency factor (69 aa).

Belongs to the UPF0161 family.

It is found in the cell membrane. Its function is as follows. Could be involved in insertion of integral membrane proteins into the membrane. This Clostridium botulinum (strain Kyoto / Type A2) protein is Putative membrane protein insertion efficiency factor.